A 131-amino-acid polypeptide reads, in one-letter code: Small ribosomal subunit protein uS8 (131 aa).

Belongs to the universal ribosomal protein uS8 family. Part of the 30S ribosomal subunit. Contacts proteins S5 and S12.

One of the primary rRNA binding proteins, it binds directly to 16S rRNA central domain where it helps coordinate assembly of the platform of the 30S subunit. This is Small ribosomal subunit protein uS8 from Ruminiclostridium cellulolyticum (strain ATCC 35319 / DSM 5812 / JCM 6584 / H10) (Clostridium cellulolyticum).